The primary structure comprises 461 residues: D-arabinono-1,4-lactone oxidase (461 aa).

Residues 24-194 (FSAISLGLRC…VDITISVVPA (171 aa)) form the FAD-binding PCMH-type domain. Pros-8alpha-FAD histidine is present on His-61.

It belongs to the oxygen-dependent FAD-linked oxidoreductase family. It depends on FAD as a cofactor.

Its subcellular location is the mitochondrion membrane. It carries out the reaction D-arabinono-1,4-lactone + O2 = dehydro-D-arabinono-1,4-lactone + H2O2 + H(+). Its pathway is cofactor biosynthesis; D-erythroascorbate biosynthesis; dehydro-D-arabinono-1,4-lactone from D-arabinose: step 2/2. This is D-arabinono-1,4-lactone oxidase (alo1) from Schizosaccharomyces pombe (strain 972 / ATCC 24843) (Fission yeast).